The primary structure comprises 247 residues: Probable transcriptional regulatory protein Spro_2779 (247 aa).

The protein belongs to the TACO1 family.

The protein localises to the cytoplasm. The sequence is that of Probable transcriptional regulatory protein Spro_2779 from Serratia proteamaculans (strain 568).